Reading from the N-terminus, the 382-residue chain is Small ribosomal subunit protein bS1 homolog (382 aa).

4 consecutive S1 motif domains span residues Gly-16 to Arg-84, Lys-102 to Arg-167, Gly-188 to Lys-256, and Gly-273 to Arg-342. A Phosphoserine modification is found at Ser-243.

Belongs to the bacterial ribosomal protein bS1 family.

Plays a role in sporulation. Cannot be expressed in wild-type E.coli, does not complement an E.coli rpsA deletion. This chain is Small ribosomal subunit protein bS1 homolog, found in Bacillus subtilis (strain 168).